The chain runs to 295 residues: Probable lipid kinase YegS-like (295 aa).

In terms of domain architecture, DAGKc spans 1-129; that stretch reads MQGRKAMLVL…IDLGQAGDQL (129 aa). ATP contacts are provided by residues T39, 65 to 71, and T92; that span reads GDGTLRD. M210, D213, and L215 together coordinate Mg(2+). E264 (proton acceptor) is an active-site residue.

It belongs to the diacylglycerol/lipid kinase family. YegS lipid kinase subfamily. Mg(2+) is required as a cofactor. It depends on Ca(2+) as a cofactor.

The protein resides in the cytoplasm. Its function is as follows. Probably phosphorylates lipids; the in vivo substrate is unknown. This Pseudomonas putida (strain ATCC 47054 / DSM 6125 / CFBP 8728 / NCIMB 11950 / KT2440) protein is Probable lipid kinase YegS-like.